A 194-amino-acid polypeptide reads, in one-letter code: Holliday junction branch migration complex subunit RuvA (194 aa).

Residues 1–64 (MIGRLRGVLT…DDSAALYGFL (64 aa)) form a domain I region. A domain II region spans residues 65-140 (SESERRLFRH…RAADFNNGIS (76 aa)). The interval 140–144 (STSGK) is flexible linker. The segment at 145–194 (LNLDTVSEAALALQQLGYKPAEAARMARDAGTESDDVATVIKKALQAALC) is domain III.

It belongs to the RuvA family. In terms of assembly, homotetramer. Forms an RuvA(8)-RuvB(12)-Holliday junction (HJ) complex. HJ DNA is sandwiched between 2 RuvA tetramers; dsDNA enters through RuvA and exits via RuvB. An RuvB hexamer assembles on each DNA strand where it exits the tetramer. Each RuvB hexamer is contacted by two RuvA subunits (via domain III) on 2 adjacent RuvB subunits; this complex drives branch migration. In the full resolvosome a probable DNA-RuvA(4)-RuvB(12)-RuvC(2) complex forms which resolves the HJ.

It is found in the cytoplasm. Its function is as follows. The RuvA-RuvB-RuvC complex processes Holliday junction (HJ) DNA during genetic recombination and DNA repair, while the RuvA-RuvB complex plays an important role in the rescue of blocked DNA replication forks via replication fork reversal (RFR). RuvA specifically binds to HJ cruciform DNA, conferring on it an open structure. The RuvB hexamer acts as an ATP-dependent pump, pulling dsDNA into and through the RuvAB complex. HJ branch migration allows RuvC to scan DNA until it finds its consensus sequence, where it cleaves and resolves the cruciform DNA. The chain is Holliday junction branch migration complex subunit RuvA from Xylella fastidiosa (strain M12).